A 442-amino-acid chain; its full sequence is Trigger factor (442 aa).

In terms of domain architecture, PPIase FKBP-type spans 176 to 259 (GDFISLSLYV…VNAVIEISSP (84 aa)).

This sequence belongs to the FKBP-type PPIase family. Tig subfamily.

The protein resides in the cytoplasm. The enzyme catalyses [protein]-peptidylproline (omega=180) = [protein]-peptidylproline (omega=0). Functionally, involved in protein export. Acts as a chaperone by maintaining the newly synthesized protein in an open conformation. Functions as a peptidyl-prolyl cis-trans isomerase. The chain is Trigger factor from Chlamydia trachomatis serovar L2 (strain ATCC VR-902B / DSM 19102 / 434/Bu).